We begin with the raw amino-acid sequence, 459 residues long: UDP-N-acetylmuramoylalanine--D-glutamate ligase (459 aa).

Residue 120–126 (GSNGKTT) coordinates ATP.

The protein belongs to the MurCDEF family.

The protein localises to the cytoplasm. The catalysed reaction is UDP-N-acetyl-alpha-D-muramoyl-L-alanine + D-glutamate + ATP = UDP-N-acetyl-alpha-D-muramoyl-L-alanyl-D-glutamate + ADP + phosphate + H(+). It functions in the pathway cell wall biogenesis; peptidoglycan biosynthesis. Cell wall formation. Catalyzes the addition of glutamate to the nucleotide precursor UDP-N-acetylmuramoyl-L-alanine (UMA). The protein is UDP-N-acetylmuramoylalanine--D-glutamate ligase of Lactobacillus acidophilus (strain ATCC 700396 / NCK56 / N2 / NCFM).